The primary structure comprises 155 residues: Large-conductance mechanosensitive channel (155 aa).

Transmembrane regions (helical) follow at residues 16-36, 40-60, and 88-108; these read VVDM…VNNL, VILP…LYII, and GVFL…FLLV.

It belongs to the MscL family. Homopentamer.

The protein resides in the cell inner membrane. Channel that opens in response to stretch forces in the membrane lipid bilayer. May participate in the regulation of osmotic pressure changes within the cell. This is Large-conductance mechanosensitive channel from Chlorobium chlorochromatii (strain CaD3).